The primary structure comprises 748 residues: Pleckstrin homology domain-containing family M member 3 (748 aa).

Disordered regions lie at residues 88–107 (HAKE…PLLS) and 129–187 (NDSL…RNKN). 2 stretches are compositionally biased toward basic and acidic residues: residues 129–140 (NDSLDHLEDAPK) and 148–159 (SRSDVSHIDWKN). Residues 167-180 (QRSSSQGMHCTSPF) are compositionally biased toward polar residues. PH domains are found at residues 200-297 (NILK…EAIC) and 348-443 (NIIK…SAAN). The segment at 656–709 (SHVYSCSLCSQKGFICEICNNGEILYPFEENSTSRCENCGAVFHSDCKVRTVPC) adopts a Phorbol-ester/DAG-type zinc-finger fold.

The protein resides in the cytoplasm. Its subcellular location is the golgi apparatus. It localises to the cell membrane. Its function is as follows. May play a role during muscle differentiation. This Xenopus laevis (African clawed frog) protein is Pleckstrin homology domain-containing family M member 3 (plekhm3).